The chain runs to 107 residues: UPF0235 protein RPC_0058 (107 aa).

It belongs to the UPF0235 family.

The chain is UPF0235 protein RPC_0058 from Rhodopseudomonas palustris (strain BisB18).